A 124-amino-acid polypeptide reads, in one-letter code: Small ribosomal subunit protein uS12 (124 aa).

A disordered region spans residues 1 to 20 (MPTIQQLVRKGRTPKVVKTK). The segment covering 9–18 (RKGRTPKVVK) has biased composition (basic residues). 3-methylthioaspartic acid is present on D89.

Belongs to the universal ribosomal protein uS12 family. As to quaternary structure, part of the 30S ribosomal subunit. Contacts proteins S8 and S17. May interact with IF1 in the 30S initiation complex.

In terms of biological role, with S4 and S5 plays an important role in translational accuracy. Functionally, interacts with and stabilizes bases of the 16S rRNA that are involved in tRNA selection in the A site and with the mRNA backbone. Located at the interface of the 30S and 50S subunits, it traverses the body of the 30S subunit contacting proteins on the other side and probably holding the rRNA structure together. The combined cluster of proteins S8, S12 and S17 appears to hold together the shoulder and platform of the 30S subunit. In Clavibacter michiganensis subsp. michiganensis (strain NCPPB 382), this protein is Small ribosomal subunit protein uS12.